The primary structure comprises 276 residues: Ribosomal RNA small subunit methyltransferase A (276 aa).

S-adenosyl-L-methionine is bound by residues Asn28, Leu30, Gly55, Glu77, Asp103, and Asn124.

It belongs to the class I-like SAM-binding methyltransferase superfamily. rRNA adenine N(6)-methyltransferase family. RsmA subfamily.

It is found in the cytoplasm. The enzyme catalyses adenosine(1518)/adenosine(1519) in 16S rRNA + 4 S-adenosyl-L-methionine = N(6)-dimethyladenosine(1518)/N(6)-dimethyladenosine(1519) in 16S rRNA + 4 S-adenosyl-L-homocysteine + 4 H(+). Functionally, specifically dimethylates two adjacent adenosines (A1518 and A1519) in the loop of a conserved hairpin near the 3'-end of 16S rRNA in the 30S particle. May play a critical role in biogenesis of 30S subunits. The chain is Ribosomal RNA small subunit methyltransferase A from Agrobacterium fabrum (strain C58 / ATCC 33970) (Agrobacterium tumefaciens (strain C58)).